A 595-amino-acid polypeptide reads, in one-letter code: TNF receptor-associated factor family protein DDB_G0272348 (595 aa).

The segment at 14–64 is disordered; it reads SFTNNNSNNNNNNNNNSNSNNNNNNNNNNINNNNNHNNNNKNNSNNKNEIN. Over residues 17 to 64 the composition is skewed to low complexity; it reads NNNSNNNNNNNNNSNSNNNNNNNNNNINNNNNHNNNNKNNSNNKNEIN. The RING-type; degenerate zinc finger occupies 87 to 134; sequence CTICSDLLVNSFHADKFKAVQCKNGHYTTCLNCWEKHLEKKKNCIQCG. TRAF-type zinc fingers lie at residues 189–253 and 254–311; these read EHLK…INKE and SHNA…SKLS. Residues 348–410 are a coiled coil; sequence LLNGQNKKIT…QQQQSQQQQQ (63 aa). Low complexity predominate over residues 409–440; it reads QQSQQQQQSQQSQQNNNSNSHFINNNNNNINN. The tract at residues 409-450 is disordered; the sequence is QQSQQQQQSQQSQQNNNSNSHFINNNNNNINNVQMSDSPNGG. Residues 441–450 are compositionally biased toward polar residues; that stretch reads VQMSDSPNGG. The MATH domain occupies 456–584; that stretch reads VYKNKWVISN…NDSITIEIEI (129 aa).

The protein belongs to the TNF receptor-associated factor family. A subfamily.

It localises to the cytoplasm. In terms of biological role, probable adapter protein and signal transducer that links members of the tumor necrosis factor receptor family to different signaling pathways by association with the receptor cytoplasmic domain and kinases. This Dictyostelium discoideum (Social amoeba) protein is TNF receptor-associated factor family protein DDB_G0272348.